Consider the following 364-residue polypeptide: F-box protein At1g59680 (364 aa).

One can recognise an F-box domain in the interval 2 to 49 (TTMSDLSVDLVGEILSRVPLTSLSAVRCTCKSWNTLSKHQIFGKAELA).

This is F-box protein At1g59680 from Arabidopsis thaliana (Mouse-ear cress).